A 405-amino-acid chain; its full sequence is Terminal uridylyltransferase cid1 (405 aa).

Residue serine 90 participates in UTP binding. Aspartate 101 and aspartate 103 together coordinate Mg(2+). UTP contacts are provided by alanine 168, asparagine 171, threonine 172, lysine 193, lysine 197, serine 211, tyrosine 212, and histidine 336. Positions 267–336 (SLGSLLHGFF…AIEDPFEISH (70 aa)) constitute a PAP-associated domain. Arginine 340 lines the ATP pocket. The tract at residues 377–405 (APIPPRRQKKTDEQSNKKLLNETDGDNSE) is disordered. Positions 386–397 (KTDEQSNKKLLN) are enriched in basic and acidic residues.

Belongs to the DNA polymerase type-B-like family. The cofactor is Mg(2+). Mn(2+) serves as cofactor.

It is found in the cytoplasm. The enzyme catalyses RNA(n) + UTP = RNA(n)-3'-uridine ribonucleotide + diphosphate. It catalyses the reaction RNA(n) + ATP = RNA(n)-3'-adenine ribonucleotide + diphosphate. Functionally, cytoplasmic uridylyltransferase that mediates the terminal uridylation of mRNAs with short poly(A) tails such as such as act1, hcn1 and urg1 mRNAs, hence facilitating global mRNA decay. Uridylates the 3' ends of actin mRNAs upon S-phase arrest. Also has a weak poly(A) polymerase (PAP) activity. Residue His-336 is responsible for the specificity for UTP. Involved in cell cycle arrest where in association with crb2/rhp9 and chk1 it inhibits unscheduled mitosis. The polypeptide is Terminal uridylyltransferase cid1 (Schizosaccharomyces pombe (strain 972 / ATCC 24843) (Fission yeast)).